A 264-amino-acid chain; its full sequence is THAP domain-containing protein 10 (264 aa).

A THAP-type zinc finger spans residues 1–90; it reads MPARCVAAHC…LVAGAVPTLH (90 aa). 2 disordered regions span residues 90–136 and 160–195; these read HRVP…PRAG and TQPHADNPSNTVTSVPTHCEEGPVHKSTQISLKRPR. The span at 99–122 shows a compositional bias: basic and acidic residues; it reads GGEEGDQAGRPDTRGELQAARHSE. Polar residues predominate over residues 160–175; the sequence is TQPHADNPSNTVTSVP.

The polypeptide is THAP domain-containing protein 10 (THAP10) (Pongo abelii (Sumatran orangutan)).